A 272-amino-acid chain; its full sequence is Rhomboid-type serine protease B (272 aa).

The next 6 helical transmembrane spans lie at 30 to 50 (LVLLVILAFWLLELQTIWSVV), 72 to 92 (PFIHVGFFHAFVNLLALTPLL), 103 to 123 (TAVALFIGPLSTFPAGIYILV), 133 to 153 (AVVGASVWIFLLLGSEAIKTF), 164 to 184 (TKIPTWTSPLFACALVSIFVP), and 186 to 206 (TSFLGHLSAIIIGYLLGLGYL). Ser-138 functions as the Nucleophile in the catalytic mechanism. His-191 is an active-site residue.

Belongs to the peptidase S54 family.

It localises to the membrane. It catalyses the reaction Cleaves type-1 transmembrane domains using a catalytic dyad composed of serine and histidine that are contributed by different transmembrane domains.. Functionally, rhomboid protease that catalyzes intramembrane proteolysis. Required for transcription factor srbA activation by mediating its release from the membrane and thereby regulating its activity under hypoxic conditions. Essential for iron homeostasis and resistance to azoles such as voriconazole. Required for virulence in murine models of invasive pulmonary aspergillosis (IPA). The protein is Rhomboid-type serine protease B of Aspergillus fumigatus (strain ATCC MYA-4609 / CBS 101355 / FGSC A1100 / Af293) (Neosartorya fumigata).